The sequence spans 295 residues: Aspartate carbamoyltransferase catalytic subunit (295 aa).

The carbamoyl phosphate site is built by arginine 54 and threonine 55. Lysine 82 serves as a coordination point for L-aspartate. Positions 104, 132, and 135 each coordinate carbamoyl phosphate. Residues arginine 165 and arginine 218 each contribute to the L-aspartate site. Glycine 257 and proline 258 together coordinate carbamoyl phosphate.

Belongs to the aspartate/ornithine carbamoyltransferase superfamily. ATCase family. In terms of assembly, heterododecamer (2C3:3R2) of six catalytic PyrB chains organized as two trimers (C3), and six regulatory PyrI chains organized as three dimers (R2).

It carries out the reaction carbamoyl phosphate + L-aspartate = N-carbamoyl-L-aspartate + phosphate + H(+). It participates in pyrimidine metabolism; UMP biosynthesis via de novo pathway; (S)-dihydroorotate from bicarbonate: step 2/3. Its function is as follows. Catalyzes the condensation of carbamoyl phosphate and aspartate to form carbamoyl aspartate and inorganic phosphate, the committed step in the de novo pyrimidine nucleotide biosynthesis pathway. This chain is Aspartate carbamoyltransferase catalytic subunit, found in Wolbachia pipientis subsp. Culex pipiens (strain wPip).